The following is a 240-amino-acid chain: Thiamine-phosphate synthase (240 aa).

4-amino-2-methyl-5-(diphosphooxymethyl)pyrimidine is bound by residues 63–67 (QYREK) and Asn94. Mg(2+)-binding residues include Asp95 and Asp114. Thr133 lines the 4-amino-2-methyl-5-(diphosphooxymethyl)pyrimidine pocket. A 2-[(2R,5Z)-2-carboxy-4-methylthiazol-5(2H)-ylidene]ethyl phosphate-binding site is contributed by 159–161 (TFT). A 4-amino-2-methyl-5-(diphosphooxymethyl)pyrimidine-binding site is contributed by Lys162. 2-[(2R,5Z)-2-carboxy-4-methylthiazol-5(2H)-ylidene]ethyl phosphate contacts are provided by residues Gly190 and 210–211 (IS).

This sequence belongs to the thiamine-phosphate synthase family. The cofactor is Mg(2+).

The enzyme catalyses 2-[(2R,5Z)-2-carboxy-4-methylthiazol-5(2H)-ylidene]ethyl phosphate + 4-amino-2-methyl-5-(diphosphooxymethyl)pyrimidine + 2 H(+) = thiamine phosphate + CO2 + diphosphate. The catalysed reaction is 2-(2-carboxy-4-methylthiazol-5-yl)ethyl phosphate + 4-amino-2-methyl-5-(diphosphooxymethyl)pyrimidine + 2 H(+) = thiamine phosphate + CO2 + diphosphate. It catalyses the reaction 4-methyl-5-(2-phosphooxyethyl)-thiazole + 4-amino-2-methyl-5-(diphosphooxymethyl)pyrimidine + H(+) = thiamine phosphate + diphosphate. It participates in cofactor biosynthesis; thiamine diphosphate biosynthesis; thiamine phosphate from 4-amino-2-methyl-5-diphosphomethylpyrimidine and 4-methyl-5-(2-phosphoethyl)-thiazole: step 1/1. Condenses 4-methyl-5-(beta-hydroxyethyl)thiazole monophosphate (THZ-P) and 2-methyl-4-amino-5-hydroxymethyl pyrimidine pyrophosphate (HMP-PP) to form thiamine monophosphate (TMP). This is Thiamine-phosphate synthase from Methanosarcina mazei (strain ATCC BAA-159 / DSM 3647 / Goe1 / Go1 / JCM 11833 / OCM 88) (Methanosarcina frisia).